A 142-amino-acid polypeptide reads, in one-letter code: MLSPRRTKFRKQQRGRMTGKATRGNTLAFGNFGLQALECSWITARQIEASRRAMTRYTRRGGKIWIRIFPDKPITMRPAETRMGSGKGNPEFWVAVVKPGRVLFEIGGEVAEETAREAMRLASHKLPIKTKFITRDSEAQEA.

The segment covering 1–14 has biased composition (basic residues); it reads MLSPRRTKFRKQQR. The disordered stretch occupies residues 1 to 22; it reads MLSPRRTKFRKQQRGRMTGKAT.

The protein belongs to the universal ribosomal protein uL16 family. Part of the 50S ribosomal subunit.

Binds 23S rRNA and is also seen to make contacts with the A and possibly P site tRNAs. The sequence is that of Large ribosomal subunit protein uL16 from Synechococcus elongatus (strain ATCC 33912 / PCC 7942 / FACHB-805) (Anacystis nidulans R2).